A 233-amino-acid chain; its full sequence is Lipoprotein-releasing system ATP-binding protein LolD (233 aa).

Residues 10–233 (YRLEGVGKEY…AGELYDQHRP (224 aa)) enclose the ABC transporter domain. 46–53 (GASGSGKS) contributes to the ATP binding site.

This sequence belongs to the ABC transporter superfamily. Lipoprotein translocase (TC 3.A.1.125) family. In terms of assembly, the complex is composed of two ATP-binding proteins (LolD) and two transmembrane proteins (LolC and LolE).

Its subcellular location is the cell inner membrane. Functionally, part of the ABC transporter complex LolCDE involved in the translocation of mature outer membrane-directed lipoproteins, from the inner membrane to the periplasmic chaperone, LolA. Responsible for the formation of the LolA-lipoprotein complex in an ATP-dependent manner. The sequence is that of Lipoprotein-releasing system ATP-binding protein LolD from Nitratidesulfovibrio vulgaris (strain ATCC 29579 / DSM 644 / CCUG 34227 / NCIMB 8303 / VKM B-1760 / Hildenborough) (Desulfovibrio vulgaris).